A 255-amino-acid polypeptide reads, in one-letter code: uncharacterized protein (255 aa).

It belongs to the methyltransferase superfamily.

This is an uncharacterized protein from Mycobacterium marinum (strain ATCC BAA-535 / M).